We begin with the raw amino-acid sequence, 696 residues long: DNA ligase (696 aa).

Residues 43-47, 92-93, and Glu122 each bind NAD(+); these read DGEFD and SL. Lys124 functions as the N6-AMP-lysine intermediate in the catalytic mechanism. 4 residues coordinate NAD(+): Arg145, Glu185, Lys301, and Lys325. Residues Cys419, Cys422, Cys438, and Cys444 each coordinate Zn(2+). A BRCT domain is found at 608–696; sequence SIPRNLEGLS…GPDAVAESGV (89 aa).

It belongs to the NAD-dependent DNA ligase family. LigA subfamily. Mg(2+) is required as a cofactor. Requires Mn(2+) as cofactor.

The catalysed reaction is NAD(+) + (deoxyribonucleotide)n-3'-hydroxyl + 5'-phospho-(deoxyribonucleotide)m = (deoxyribonucleotide)n+m + AMP + beta-nicotinamide D-nucleotide.. Functionally, DNA ligase that catalyzes the formation of phosphodiester linkages between 5'-phosphoryl and 3'-hydroxyl groups in double-stranded DNA using NAD as a coenzyme and as the energy source for the reaction. It is essential for DNA replication and repair of damaged DNA. The polypeptide is DNA ligase (Rhodococcus jostii (strain RHA1)).